The primary structure comprises 65 residues: Large ribosomal subunit protein bL35 (65 aa).

Residues 1 to 15 (MPKMKTKKSASKRFT) show a composition bias toward basic residues. Positions 1–27 (MPKMKTKKSASKRFTARPNGSFKRGQA) are disordered.

The protein belongs to the bacterial ribosomal protein bL35 family.

The polypeptide is Large ribosomal subunit protein bL35 (Cupriavidus pinatubonensis (strain JMP 134 / LMG 1197) (Cupriavidus necator (strain JMP 134))).